The chain runs to 90 residues: Phosphocarrier protein NPr (90 aa).

The HPr domain maps to 2–90 (TVKQTVEISN…ALFNAGFDED (89 aa)). Residue histidine 16 is the Pros-phosphohistidine intermediate of the active site.

The protein belongs to the HPr family.

Its subcellular location is the cytoplasm. Component of the phosphoenolpyruvate-dependent nitrogen-metabolic phosphotransferase system (nitrogen-metabolic PTS), that seems to be involved in regulating nitrogen metabolism. The phosphoryl group from phosphoenolpyruvate (PEP) is transferred to the phosphoryl carrier protein NPr by enzyme I-Ntr. Phospho-NPr then transfers it to EIIA-Ntr. Could function in the transcriptional regulation of sigma-54 dependent operons in conjunction with the NPr (PtsO) and EIIA-Ntr (PtsN) proteins. The protein is Phosphocarrier protein NPr (ptsO) of Klebsiella oxytoca.